A 567-amino-acid polypeptide reads, in one-letter code: Proline--tRNA ligase (567 aa).

It belongs to the class-II aminoacyl-tRNA synthetase family. ProS type 1 subfamily. As to quaternary structure, homodimer.

The protein localises to the cytoplasm. It carries out the reaction tRNA(Pro) + L-proline + ATP = L-prolyl-tRNA(Pro) + AMP + diphosphate. Catalyzes the attachment of proline to tRNA(Pro) in a two-step reaction: proline is first activated by ATP to form Pro-AMP and then transferred to the acceptor end of tRNA(Pro). As ProRS can inadvertently accommodate and process non-cognate amino acids such as alanine and cysteine, to avoid such errors it has two additional distinct editing activities against alanine. One activity is designated as 'pretransfer' editing and involves the tRNA(Pro)-independent hydrolysis of activated Ala-AMP. The other activity is designated 'posttransfer' editing and involves deacylation of mischarged Ala-tRNA(Pro). The misacylated Cys-tRNA(Pro) is not edited by ProRS. The protein is Proline--tRNA ligase of Campylobacter curvus (strain 525.92).